Reading from the N-terminus, the 250-residue chain is Anamorsin homolog 1 (250 aa).

The segment at 1–104 (MNLKITINQQ…KKLNIPQQEF (104 aa)) is N-terminal SAM-like domain. Residues 104 to 149 (FNNCYGKYDYIEQKFQNQINFFKQVDINGKQEIIDENELLDDGVQV) form a linker region. 4 residues coordinate [2Fe-2S] cluster: Cys-155, Cys-162, Cys-165, and Cys-167. The tract at residues 155 to 167 (CASKPRACANCTC) is fe-S binding site A. The [4Fe-4S] cluster site is built by Cys-193, Cys-196, Cys-204, and Cys-207. 2 short sequence motifs (cx2C motif) span residues 193–196 (CGSC) and 204–207 (CANC). A fe-S binding site B region spans residues 193-207 (CGSCYLGDAFRCANC).

It belongs to the anamorsin family. As to quaternary structure, monomer. Requires [2Fe-2S] cluster as cofactor. [4Fe-4S] cluster is required as a cofactor.

The protein localises to the cytoplasm. Its subcellular location is the mitochondrion intermembrane space. Its function is as follows. Component of the cytosolic iron-sulfur (Fe-S) protein assembly (CIA) machinery. Required for the maturation of extramitochondrial Fe-S proteins. Part of an electron transfer chain functioning in an early step of cytosolic Fe-S biogenesis, facilitating the de novo assembly of a [4Fe-4S] cluster on the cytosolic Fe-S scaffold complex. Electrons are transferred from NADPH via a FAD- and FMN-containing diflavin oxidoreductase. Together with the diflavin oxidoreductase, also required for the assembly of the diferric tyrosyl radical cofactor of ribonucleotide reductase (RNR), probably by providing electrons for reduction during radical cofactor maturation in the catalytic small subunit. This Paramecium tetraurelia protein is Anamorsin homolog 1.